Reading from the N-terminus, the 475-residue chain is UDP-N-acetylmuramate--L-alanine ligase (475 aa).

An ATP-binding site is contributed by 112-118; sequence GTHGKTT.

This sequence belongs to the MurCDEF family.

It is found in the cytoplasm. The catalysed reaction is UDP-N-acetyl-alpha-D-muramate + L-alanine + ATP = UDP-N-acetyl-alpha-D-muramoyl-L-alanine + ADP + phosphate + H(+). The protein operates within cell wall biogenesis; peptidoglycan biosynthesis. Its function is as follows. Cell wall formation. The protein is UDP-N-acetylmuramate--L-alanine ligase of Methylobacillus flagellatus (strain ATCC 51484 / DSM 6875 / VKM B-1610 / KT).